Consider the following 344-residue polypeptide: Trace amine-associated receptor 8b (344 aa).

At 1-31 (MTSNFSQPALQLCYENTNGSCIKTPYSPGPR) the chain is on the extracellular side. N-linked (GlcNAc...) asparagine glycosylation is found at Asn4 and Asn18. Cystine bridges form between Cys21–Cys185 and Cys104–Cys189. The chain crosses the membrane as a helical span at residues 32–52 (VILYMVFGFGAVLAVCGNLLV). The Cytoplasmic portion of the chain corresponds to 53-67 (VISVLHFKQLHSPAN). The helical transmembrane segment at 68 to 88 (FLIASLASADFLVGISVMPFS) threads the bilayer. The Extracellular portion of the chain corresponds to 89–111 (MVRSIESCWYFGDAFCSLHSCCD). The helical transmembrane segment at 112–132 (VAFCYSSALHLCFISVDRYIA) threads the bilayer. The Cytoplasmic portion of the chain corresponds to 133-146 (VTDPLVYPTKFTVS). The chain crosses the membrane as a helical span at residues 147 to 167 (VSGICISISWILPLVYSSAVF). The Extracellular portion of the chain corresponds to 168–195 (YTGISAKGIESLVSALNCVGGCQIVVNQ). Residues 196-216 (DWVLIDFLLFFIPTLVMIILY) traverse the membrane as a helical segment. The Cytoplasmic segment spans residues 217 to 260 (SKIFLVAKQQAVKIETSVSDNRGESSSESHKARVAKRERKAAKT). The helical transmembrane segment at 261–281 (LGVTVVAFMVSWLPYTIDSLV) threads the bilayer. A topological domain (extracellular) is located at residue Asp282. The chain crosses the membrane as a helical span at residues 283–303 (AFVGFITPAYVYEICCWSAYY). At 304-344 (NSAMNPLIYAFFYPWFRKAIKLILSGEILKSHSSTMSLFSE) the chain is on the cytoplasmic side.

Belongs to the G-protein coupled receptor 1 family. In terms of tissue distribution, specifically expressed in neurons of the olfactory epithelium.

Its subcellular location is the cell membrane. In terms of biological role, olfactory receptor specific for trace amines. Trace amine compounds are enriched in animal body fluids and act on trace amine-associated receptors (TAARs) to elicit both intraspecific and interspecific innate behaviors. Ligand-binding causes a conformation change that triggers signaling via G alpha proteins, possibly G(i)/G(o) G alpha proteins. The chain is Trace amine-associated receptor 8b from Mus musculus (Mouse).